We begin with the raw amino-acid sequence, 157 residues long: Biotin carboxyl carrier protein of acetyl-CoA carboxylase (157 aa).

In terms of domain architecture, Biotinyl-binding spans 80–156 (YATIVSPMVG…DCGQALMKVE (77 aa)). Lys122 is modified (N6-biotinyllysine).

Its subcellular location is the plastid. It localises to the chloroplast. It functions in the pathway lipid metabolism; fatty acid biosynthesis. Functionally, this protein is a component of the acetyl coenzyme A carboxylase complex; first, biotin carboxylase catalyzes the carboxylation of the carrier protein and then the transcarboxylase transfers the carboxyl group to form malonyl-CoA. This chain is Biotin carboxyl carrier protein of acetyl-CoA carboxylase (accB), found in Porphyra purpurea (Red seaweed).